A 953-amino-acid polypeptide reads, in one-letter code: Coatomer subunit beta (953 aa).

Thr2 is modified (N-acetylthreonine). HEAT repeat units lie at residues 96–131 (HEMI…KEAE), 132–168 (LLEP…NFEH), 240–276 (SERA…SAPT), 277–314 (AIKA…HPAH), 316–353 (RVLQ…SRNV), and 396–433 (DMAA…RFDN). Lys494 is modified (N6-acetyllysine).

Oligomeric complex that consists of at least the alpha, beta, beta', gamma, delta, epsilon and zeta subunits. Interacts with CAPN8. Interacts with SCYL1 and PRKCE. Interacts with COPG1. Interacts with ARF1 (myristoylated); this interaction is required for binding of COPB1 to Golgi membranes. Interacts (via trunk domain) with ARF1 (via switch I region); the interaction is direct. Interacts with KCNK2 (via N-terminus); this interaction increases the channel-mediated whole cell currents and promotes plasma membrane expression of KCNK2. Interacts with STX17. Interacts with TMEM115. Interacts with TMEM41B. Proteolytically cleaved between Ser-528 and Ser-529 by CAPN8. As to expression, predominantly expressed in the upper one-third of the oxyntic mucosa and in most regions of the pyloric mucosa. Ubiquitously expressed including platelet, liver, heart, spleen, lung and kidney.

The protein resides in the cytoplasm. The protein localises to the golgi apparatus membrane. It localises to the cytoplasmic vesicle. Its subcellular location is the COPI-coated vesicle membrane. It is found in the cell membrane. The protein resides in the endoplasmic reticulum-Golgi intermediate compartment. Functionally, the coatomer is a cytosolic protein complex that binds to dilysine motifs and reversibly associates with Golgi non-clathrin-coated vesicles, which further mediate biosynthetic protein transport from the ER, via the Golgi up to the trans Golgi network. Coatomer complex is required for budding from Golgi membranes, and is essential for the retrograde Golgi-to-ER transport of dilysine-tagged proteins. In mammals, the coatomer can only be recruited by membranes associated to ADP-ribosylation factors (ARFs), which are small GTP-binding proteins; the complex also influences the Golgi structural integrity, as well as the processing, activity, and endocytic recycling of LDL receptors. Involved in the Golgi disassembly and reassembly processes during cell cycle. Involved in autophagy by playing a role in early endosome function. Plays a role in organellar compartmentalization of secretory compartments including endoplasmic reticulum (ER)-Golgi intermediate compartment (ERGIC), Golgi, trans-Golgi network (TGN) and recycling endosomes, and in biosynthetic transport of CAV1. Plays a functional role in facilitating the transport of kappa-type opioid receptor mRNAs into axons and enhances translation of these proteins in cortical neurons. Required for limiting lipid storage in lipid droplets. Involved in lipid homeostasis by regulating the presence of perilipin family members PLIN2 and PLIN3 at the lipid droplet surface and promoting the association of adipocyte triglyceride lipase (PNPLA2) with the lipid droplet surface to mediate lipolysis. This is Coatomer subunit beta (Copb1) from Mus musculus (Mouse).